We begin with the raw amino-acid sequence, 589 residues long: Ubiquilin-1 (589 aa).

The segment covering 1 to 11 (MAESGESGGPP) has biased composition (gly residues). Disordered regions lie at residues 1-35 (MAES…AEPK) and 110-145 (NRPQ…ATSN). Alanine 2 is modified (N-acetylalanine). Residues 12 to 35 (GSQDSAAGAEGAGAPAAAASAEPK) are compositionally biased toward low complexity. The region spanning 37 to 111 (MKVTVKTPKE…VHLVIKTQNR (75 aa)) is the Ubiquitin-like domain. The span at 110-124 (NRPQDHSAQQTNTAG) shows a compositional bias: polar residues. The span at 125–145 (SNVTTSSTPNSNSTSGSATSN) shows a compositional bias: low complexity. The segment at 178-428 (QLLSNPEMMV…LNNPLFAGNP (251 aa)) is interaction with UBXN4. STI1 domains lie at 182–210 (NPEM…QLIM) and 212–251 (NPQM…MQEM). The disordered stretch occupies residues 295-371 (PFASLVSNTS…NLVPGVGASM (77 aa)). Residues 299-313 (LVSNTSSGEGSQPSR) show a composition bias toward polar residues. A compositionally biased stretch (low complexity) spans 327–360 (QTSQSSSASSGTASTVGGTTGSTASGTSGQSTTA). STI1 domains lie at 387–434 (NPQL…QEQM) and 438–470 (LPTF…QQGL). Positions 488–520 (LGALGSTGGSSGTNGSNATPSENTSPTAGTTEP) are disordered. Residues 489 to 499 (GALGSTGGSSG) are compositionally biased toward gly residues. Over residues 509–520 (ENTSPTAGTTEP) the composition is skewed to polar residues. The UBA domain maps to 546-586 (RFQQQLEQPSAMGFLNREANLQALIATGGDINAAIERLLGS).

Monomer and homodimer. Heterodimer with UBQLN2. Binds CD47, NBL1, GABRA1, GABRA2, GABRA3, GABRA6, GABRB1, GABRB2 and GABRB3. Binds UBE3A, BTRC, P4HB and MTOR. Interacts with the proteasome 19S subunit. Interacts (via ubiquitin-like domain) with TREX1; the interaction is direct and may control TREX1 subcellular location. Forms a complex with UBXN4 and VCP. Interacts (via UBA domain) with UBQLN4 (via ubiquitin-like domain). Found in a complex with UBQLN2 and MAP1LC3A/B/C. The monomeric form interacts with PSEN1 and PSEN2. Interacts with ORAI1. Interacts (via UBA domain) with TICAM1. Interacts with EPS15. Interacts (via UBA domain) with UBA52 and (via ubiquitin-like domain) with PSMD3 and PSMD4. Interacts with HERPUD1. Interacts with MAP1LC3A/B/C in the presence of UBQLN4. Interacts (via ubiquitin-like domain) with EPS15 (via UIM domains) and both the ubiquitinated and non-ubiquitinated forms can interact with EPS15. Interacts (via ubiquitin-like domain) with EPS15L1, HGS (via UIM domain) and STAM2 (via UIM domain). Interacts with BCL2L10/BCL-B; in the cytoplasm. Post-translationally, degraded during both macroautophagy and during chaperone-mediated autophagy (CMA). In terms of processing, phosphorylated. Ubiquitinated.

It is found in the nucleus. The protein resides in the cytoplasm. It localises to the endoplasmic reticulum. Its subcellular location is the cytoplasmic vesicle. The protein localises to the autophagosome. It is found in the cell membrane. Its function is as follows. Plays an important role in the regulation of different protein degradation mechanisms and pathways including ubiquitin-proteasome system (UPS), autophagy and endoplasmic reticulum-associated protein degradation (ERAD) pathway. Mediates the proteasomal targeting of misfolded or accumulated proteins for degradation by binding (via UBA domain) to their polyubiquitin chains and by interacting (via ubiquitin-like domain) with the subunits of the proteasome. Plays a role in the ERAD pathway via its interaction with ER-localized proteins UBXN4, VCP and HERPUD1 and may form a link between the polyubiquitinated ERAD substrates and the proteasome. Plays a role in unfolded protein response (UPR) by attenuating the induction of UPR-inducible genes, DDTI3/CHOP, HSPA5 and PDIA2 during ER stress. Involved in the regulation of macroautophagy and autophagosome formation; required for maturation of autophagy-related protein LC3 from the cytosolic form LC3-I to the membrane-bound form LC3-II and may assist in the maturation of autophagosomes to autolysosomes by mediating autophagosome-lysosome fusion. Negatively regulates the TICAM1/TRIF-dependent toll-like receptor signaling pathway by decreasing the abundance of TICAM1 via the autophagic pathway. Promotes the ubiquitination and lysosomal degradation of ORAI1, consequently down-regulating the ORAI1-mediated Ca2+ mobilization. Suppresses the maturation and proteasomal degradation of amyloid beta A4 protein (A4) by stimulating the lysine 63 (K63)-linked polyubiquitination. Delays the maturation of A4 by sequestering it in the Golgi apparatus and preventing its transport to the cell surface for subsequent processing. Ubiquitinates BCL2L10 and thereby stabilizes protein abundance. The chain is Ubiquilin-1 (UBQLN1) from Pongo abelii (Sumatran orangutan).